The primary structure comprises 132 residues: Small ribosomal subunit protein uS8 (132 aa).

It belongs to the universal ribosomal protein uS8 family. As to quaternary structure, part of the 30S ribosomal subunit. Contacts proteins S5 and S12.

Its function is as follows. One of the primary rRNA binding proteins, it binds directly to 16S rRNA central domain where it helps coordinate assembly of the platform of the 30S subunit. This is Small ribosomal subunit protein uS8 from Rhizobium meliloti (strain 1021) (Ensifer meliloti).